Consider the following 252-residue polypeptide: Hydroxyacylglutathione hydrolase (252 aa).

The Zn(2+) site is built by His-54, His-56, Asp-58, His-59, His-111, Asp-128, and His-166.

Belongs to the metallo-beta-lactamase superfamily. Glyoxalase II family. In terms of assembly, monomer. Zn(2+) serves as cofactor.

It carries out the reaction an S-(2-hydroxyacyl)glutathione + H2O = a 2-hydroxy carboxylate + glutathione + H(+). The protein operates within secondary metabolite metabolism; methylglyoxal degradation; (R)-lactate from methylglyoxal: step 2/2. Thiolesterase that catalyzes the hydrolysis of S-D-lactoyl-glutathione to form glutathione and D-lactic acid. In Aliivibrio salmonicida (strain LFI1238) (Vibrio salmonicida (strain LFI1238)), this protein is Hydroxyacylglutathione hydrolase.